The following is a 143-amino-acid chain: UPF0047 protein MTH_771 (143 aa).

This sequence belongs to the UPF0047 family.

The protein is UPF0047 protein MTH_771 of Methanothermobacter thermautotrophicus (strain ATCC 29096 / DSM 1053 / JCM 10044 / NBRC 100330 / Delta H) (Methanobacterium thermoautotrophicum).